The sequence spans 102 residues: Large ribosomal subunit protein bL21 (102 aa).

This sequence belongs to the bacterial ribosomal protein bL21 family. Part of the 50S ribosomal subunit. Contacts protein L20.

This protein binds to 23S rRNA in the presence of protein L20. The polypeptide is Large ribosomal subunit protein bL21 (Lachnospira eligens (strain ATCC 27750 / DSM 3376 / VPI C15-48 / C15-B4) (Eubacterium eligens)).